Consider the following 296-residue polypeptide: Nucleotide-binding protein Pnuc_1915 (296 aa).

8 to 15 provides a ligand contact to ATP; sequence GISGSGKS. GTP is bound at residue 57-60; it reads DARR.

Belongs to the RapZ-like family.

Displays ATPase and GTPase activities. This is Nucleotide-binding protein Pnuc_1915 from Polynucleobacter asymbioticus (strain DSM 18221 / CIP 109841 / QLW-P1DMWA-1) (Polynucleobacter necessarius subsp. asymbioticus).